A 159-amino-acid chain; its full sequence is Urease accessory protein UreE (159 aa).

It belongs to the UreE family.

It is found in the cytoplasm. Its function is as follows. Involved in urease metallocenter assembly. Binds nickel. Probably functions as a nickel donor during metallocenter assembly. The protein is Urease accessory protein UreE of Vibrio parahaemolyticus.